The sequence spans 234 residues: Probable RNA/DNA demethylase ALKBH6 (234 aa).

Residues 96 to 222 form the Fe2OG dioxygenase domain; that stretch reads TANHVLVNEY…RVSLTIRHVP (127 aa). 2-oxoglutarate is bound by residues N103 and Y105. H114, D116, and H180 together coordinate Fe cation. Residues R213 and S215 each contribute to the 2-oxoglutarate site.

Belongs to the alkB family. Fe(2+) serves as cofactor.

The protein resides in the cytoplasm. It localises to the nucleus. Probable Fe(2+)/2-oxoglutarate-dependent dioxygenase involved in oxidative demethylation of nucleic acids. Binds nucleic acids with a preference for ssDNA or ssRNA to other types of DNAs. May play a role in nucleic acid damage repair. The sequence is that of Probable RNA/DNA demethylase ALKBH6 (alkbh6) from Danio rerio (Zebrafish).